The sequence spans 852 residues: Envelope glycoprotein gp160 (852 aa).

Positions 1–32 (MRVKGIKKNYQHLWRWGGMMLLGILMICSATD) are cleaved as a signal peptide. Residues 33-680 (KLWVTVYYGV…ITNWLWYIKI (648 aa)) lie on the Extracellular side of the membrane. The N-linked (GlcNAc...) asparagine; by host glycan is linked to N49. A disulfide bridge links C54 with C74. N-linked (GlcNAc...) asparagine; by host glycans are attached at residues N88, N135, N138, N154, N158, N197, N234, N241, N262, N276, N289, N295, N301, N331, N354, and N360. Disulfide bonds link C119–C205, C126–C196, C131–C155, C218–C247, and C228–C239. Residues 131–154 (CHDFNATNATSNSGKMMEGGEMKN) are V1. The tract at residues 155-196 (CSFNITTSIRDKMQKEYALFYKLDIVPIDNDKTNTRYRLISC) is V2. The tract at residues 296–329 (CTRPNNNTRKRITMGPGRVYYTTGQIIGDIRRAH) is V3. A disulfide bond links C296 and C330. The CD4-binding loop stretch occupies residues 362 to 372 (SSGGDPEIVMH). 2 disulfide bridges follow: C376–C439 and C383–C412. The tract at residues 383-412 (CNTTQLFNSTWYRNTTGNITEGNSPITLPC) is V4. N384, N390, N396, N400, N442, and N456 each carry an N-linked (GlcNAc...) asparagine; by host glycan. V5 stretches follow at residues 454-467 (NNNE…FRPG) and 457-467 (ETTDTEIFRPG). A fusion peptide region spans residues 508–528 (AVGLGALFLGFLGAAGSTMGA). The segment at 570-588 (KQLQARVLAVERYLKDQQL) is immunosuppression. A disulfide bridge connects residues C594 and C600. 5 N-linked (GlcNAc...) asparagine; by host glycosylation sites follow: N607, N612, N621, N633, and N670. A coiled-coil region spans residues 629 to 663 (REIDNYTNLIYSLIEDSQIQQEKNEKELLELDKWA). Residues 658–679 (ELDKWASLWNWFNITNWLWYIK) form an MPER; binding to GalCer region. A helical membrane pass occupies residues 681–701 (FIMIVGGLIGLRIVFAVLSIV). At 702-852 (NRVRQGYSPL…IRQGLERALQ (151 aa)) the chain is on the cytoplasmic side. The YXXL motif; contains endocytosis signal motif lies at 708–711 (YSPL). The tract at residues 715–741 (TRLPGRRGPDRPEGIEEEGGERDRDRS) is disordered.

The protein belongs to the HIV-1 env protein family. As to quaternary structure, the mature envelope protein (Env) consists of a homotrimer of non-covalently associated gp120-gp41 heterodimers. The resulting complex protrudes from the virus surface as a spike. There seems to be as few as 10 spikes on the average virion. Interacts with host CD4, CCR5 and CXCR4. Gp120 also interacts with the C-type lectins CD209/DC-SIGN and CLEC4M/DC-SIGNR (collectively referred to as DC-SIGN(R)). Gp120 and gp41 interact with GalCer. Gp120 interacts with host ITGA4/ITGB7 complex; on CD4+ T-cells, this interaction results in rapid activation of integrin ITGAL/LFA-1, which facilitates efficient cell-to-cell spreading of HIV-1. Gp120 interacts with cell-associated heparan sulfate; this interaction increases virus infectivity on permissive cells and may be involved in infection of CD4- cells. The mature envelope protein (Env) consists of a homotrimer of non-covalently associated gp120-gp41 heterodimers. The resulting complex protrudes from the virus surface as a spike. There seems to be as few as 10 spikes on the average virion. Highly glycosylated by host. The high number of glycan on the protein is reffered to as 'glycan shield' because it contributes to hide protein sequence from adaptive immune system. In terms of processing, palmitoylation of the transmembrane protein and of Env polyprotein (prior to its proteolytic cleavage) is essential for their association with host cell membrane lipid rafts. Palmitoylation is therefore required for envelope trafficking to classical lipid rafts, but not for viral replication. Post-translationally, specific enzymatic cleavages in vivo yield mature proteins. Envelope glycoproteins are synthesized as an inactive precursor that is heavily N-glycosylated and processed likely by host cell furin in the Golgi to yield the mature SU and TM proteins. The cleavage site between SU and TM requires the minimal sequence [KR]-X-[KR]-R. About 2 of the 9 disulfide bonds of gp41 are reduced by P4HB/PDI, following binding to CD4 receptor.

The protein resides in the virion membrane. It localises to the host cell membrane. It is found in the host endosome membrane. Oligomerizes in the host endoplasmic reticulum into predominantly trimers. In a second time, gp160 transits in the host Golgi, where glycosylation is completed. The precursor is then proteolytically cleaved in the trans-Golgi and thereby activated by cellular furin or furin-like proteases to produce gp120 and gp41. Its function is as follows. Attaches the virus to the host lymphoid cell by binding to the primary receptor CD4. This interaction induces a structural rearrangement creating a high affinity binding site for a chemokine coreceptor like CXCR4 and/or CCR5. Acts as a ligand for CD209/DC-SIGN and CLEC4M/DC-SIGNR, which are respectively found on dendritic cells (DCs), and on endothelial cells of liver sinusoids and lymph node sinuses. These interactions allow capture of viral particles at mucosal surfaces by these cells and subsequent transmission to permissive cells. HIV subverts the migration properties of dendritic cells to gain access to CD4+ T-cells in lymph nodes. Virus transmission to permissive T-cells occurs either in trans (without DCs infection, through viral capture and transmission), or in cis (following DCs productive infection, through the usual CD4-gp120 interaction), thereby inducing a robust infection. In trans infection, bound virions remain infectious over days and it is proposed that they are not degraded, but protected in non-lysosomal acidic organelles within the DCs close to the cell membrane thus contributing to the viral infectious potential during DCs' migration from the periphery to the lymphoid tissues. On arrival at lymphoid tissues, intact virions recycle back to DCs' cell surface allowing virus transmission to CD4+ T-cells. In terms of biological role, acts as a class I viral fusion protein. Under the current model, the protein has at least 3 conformational states: pre-fusion native state, pre-hairpin intermediate state, and post-fusion hairpin state. During fusion of viral and target intracellular membranes, the coiled coil regions (heptad repeats) assume a trimer-of-hairpins structure, positioning the fusion peptide in close proximity to the C-terminal region of the ectodomain. The formation of this structure appears to drive apposition and subsequent fusion of viral and target cell membranes. Complete fusion occurs in host cell endosomes and is dynamin-dependent, however some lipid transfer might occur at the plasma membrane. The virus undergoes clathrin-dependent internalization long before endosomal fusion, thus minimizing the surface exposure of conserved viral epitopes during fusion and reducing the efficacy of inhibitors targeting these epitopes. Membranes fusion leads to delivery of the nucleocapsid into the cytoplasm. This chain is Envelope glycoprotein gp160, found in Human immunodeficiency virus type 1 group M subtype B (isolate BRVA) (HIV-1).